We begin with the raw amino-acid sequence, 535 residues long: Importin subunit alpha-2 (535 aa).

Positions 1–58 (MSLRPNAKTEVRRNRYKVAVDAEEGRRRREDNMVEIRKSKREESLQKKRREGLQANQL) constitute an IBB domain. Residues 20–46 (VDAEEGRRRREDNMVEIRKSKREESLQ) show a composition bias toward basic and acidic residues. The disordered stretch occupies residues 20–67 (VDAEEGRRRREDNMVEIRKSKREESLQKKRREGLQANQLPQFAPSPVP). ARM repeat units lie at residues 67–106 (PASS…KLLS), 110–150 (SPPI…NIAS), 153–192 (SENT…NVAG), 195–235 (PRCR…NFCR), 237–276 (KPQP…YLSD), 279–318 (NDKI…NIVT), 321–361 (DLQT…NITA), 364–403 (RDQI…NATS), 407–446 (PDQI…NILK), and 461–500 (NFYA…TYWL).

Belongs to the importin alpha family. As to quaternary structure, forms a complex with the importin subunit beta-1 KPNB1. Interacts with A.tumefaciens VirD2 and VirE2. Binds to SWO1.

The protein resides in the nucleus envelope. Its function is as follows. Binds to conventional NLS motifs and mediates nuclear protein import across the nuclear envelope. Involved in the maintenance of cell wall integrity under salt stress via interaction with SWO1. Acts as a cellular receptor for the nuclear import of the virD2 protein of Agrobacterium, but is not essential for Agrobacterium-mediated root transformation. The protein is Importin subunit alpha-2 of Arabidopsis thaliana (Mouse-ear cress).